We begin with the raw amino-acid sequence, 835 residues long: Ubiquitin carboxyl-terminal hydrolase 26 (835 aa).

The interval 102 to 128 is disordered; sequence SQGSIRPARSDERCGEPSTSAQELNGS. Residues 118–128 show a composition bias toward polar residues; that stretch reads PSTSAQELNGS. Residues 286–816 enclose the USP domain; it reads QGLPNVGNTC…TGYVFFYMHN (531 aa). Catalysis depends on Cys-295, which acts as the Nucleophile. Positions 597–747 are disordered; it reads NRESEAQSGK…TRKVDPTKLN (151 aa). 2 stretches are compositionally biased toward basic and acidic residues: residues 634–652 and 669–679; these read LTKE…RPSD and KCNEGRSDKQI. A compositionally biased stretch (polar residues) spans 683–708; sequence ALTQSRPKPISQEQTENLGKTTLSHT. A compositionally biased stretch (low complexity) spans 709–725; it reads QDSSQSSQSSSDSSKSS. Residues 726–747 show a composition bias toward basic and acidic residues; sequence RCSDDLDKKAKPTRKVDPTKLN. Residue His-771 is the Proton acceptor of the active site.

It belongs to the peptidase C19 family. In terms of assembly, interacts with RING1.

The protein localises to the nucleus. Its subcellular location is the cytoplasm. It is found in the cytoskeleton. It localises to the flagellum axoneme. It carries out the reaction Thiol-dependent hydrolysis of ester, thioester, amide, peptide and isopeptide bonds formed by the C-terminal Gly of ubiquitin (a 76-residue protein attached to proteins as an intracellular targeting signal).. In terms of biological role, deubiquitinase regulating several biological processes through the deubiquitination of components of these processes. Involved in somatic cell reprogramming through the 'Lys-48'-linked deubiquitination and stabilization of CBX4 and CBX6, two components of the polycomb-repressive complex 1 (PRC1). Also deubiquitinates and probably stabilizes the androgen receptor (AR), regulating the androgen receptor signaling pathway. May play a role in spermatogenesis. This is Ubiquitin carboxyl-terminal hydrolase 26 from Mus musculus (Mouse).